The following is a 259-amino-acid chain: Type III pantothenate kinase (259 aa).

Position 6-13 (6-13 (DIGNTNVV)) interacts with ATP. 107–110 (GADR) contributes to the substrate binding site. The Proton acceptor role is filled by Asp109. Residue Asp129 participates in K(+) binding. Thr132 contacts ATP. A substrate-binding site is contributed by Thr184.

It belongs to the type III pantothenate kinase family. Homodimer. Requires NH4(+) as cofactor. K(+) is required as a cofactor.

It is found in the cytoplasm. The catalysed reaction is (R)-pantothenate + ATP = (R)-4'-phosphopantothenate + ADP + H(+). It participates in cofactor biosynthesis; coenzyme A biosynthesis; CoA from (R)-pantothenate: step 1/5. In terms of biological role, catalyzes the phosphorylation of pantothenate (Pan), the first step in CoA biosynthesis. The protein is Type III pantothenate kinase of Thermomicrobium roseum (strain ATCC 27502 / DSM 5159 / P-2).